Reading from the N-terminus, the 956-residue chain is Endogenous retrovirus group K member 8 Pol protein (956 aa).

Residues 57 to 245 enclose the Reverse transcriptase domain; it reads LEKGHIEPSF…TPFHYLGMQI (189 aa). The LPQG motif lies at 161–164; it reads LPQG. The YXDD signature appears at 195 to 198; the sequence is YIDD. Residues 460–590 form the RNase H type-1 domain; the sequence is LENALTVFTD…ADLLVSSALI (131 aa). Mg(2+)-binding residues include Asp-469, Glu-497, Asp-517, and Asp-582. The segment at 587–628 adopts an Integrase-type zinc-finger fold; that stretch reads SALIKAQELHALTHVNAAGLKNKFDVTWKQAKDIVQHCTQCQ. Positions 596, 600, 624, and 627 each coordinate Zn(2+). Positions 642–803 constitute an Integrase catalytic domain; the sequence is RGLCPNALWQ…TSAEQHLTGK (162 aa). The segment at residues 811-859 is a DNA-binding region (integrase-type); it reads KLIWWKDNKNKTWEIGKVITWGRGFACVSPGENQLPVWIPTRHLKFYNE. Residues 864–890 are disordered; sequence AKKSTSAETETPQSSTVDSQDEQNGDV. Residues 869–881 show a composition bias toward polar residues; that stretch reads SAETETPQSSTVD.

This sequence belongs to the beta type-B retroviral polymerase family. HERV class-II K(HML-2) pol subfamily.

It carries out the reaction DNA(n) + a 2'-deoxyribonucleoside 5'-triphosphate = DNA(n+1) + diphosphate. The catalysed reaction is Endonucleolytic cleavage to 5'-phosphomonoester.. Early post-infection, the reverse transcriptase converts the viral RNA genome into double-stranded viral DNA. The RNase H domain of the reverse transcriptase performs two functions. It degrades the RNA template and specifically removes the RNA primer from the RNA/DNA hybrid. Following nuclear import, the integrase catalyzes the insertion of the linear, double-stranded viral DNA into the host cell chromosome. Endogenous Pol proteins may have kept, lost or modified their original function during evolution. The protein is Endogenous retrovirus group K member 8 Pol protein (ERVK-8) of Homo sapiens (Human).